The sequence spans 786 residues: Endonuclease MutS2 (786 aa).

335 to 342 contacts ATP; it reads GPNTGGKT. Residues 529–549 are disordered; it reads SQKNAERERKEAEEHRKQSEK. Residues 711 to 786 enclose the Smr domain; the sequence is LDLRGERYED…GLGVTVVELK (76 aa).

Belongs to the DNA mismatch repair MutS family. MutS2 subfamily. As to quaternary structure, homodimer. Binds to stalled ribosomes, contacting rRNA.

In terms of biological role, endonuclease that is involved in the suppression of homologous recombination and thus may have a key role in the control of bacterial genetic diversity. Its function is as follows. Acts as a ribosome collision sensor, splitting the ribosome into its 2 subunits. Detects stalled/collided 70S ribosomes which it binds and splits by an ATP-hydrolysis driven conformational change. Acts upstream of the ribosome quality control system (RQC), a ribosome-associated complex that mediates the extraction of incompletely synthesized nascent chains from stalled ribosomes and their subsequent degradation. Probably generates substrates for RQC. The chain is Endonuclease MutS2 from Bacillus mycoides (strain KBAB4) (Bacillus weihenstephanensis).